The primary structure comprises 292 residues: 4-hydroxy-tetrahydrodipicolinate synthase (292 aa).

Residue T45 coordinates pyruvate. The active-site Proton donor/acceptor is Y133. The active-site Schiff-base intermediate with substrate is the K161. I203 is a pyruvate binding site.

It belongs to the DapA family. As to quaternary structure, homotetramer; dimer of dimers.

It localises to the cytoplasm. The catalysed reaction is L-aspartate 4-semialdehyde + pyruvate = (2S,4S)-4-hydroxy-2,3,4,5-tetrahydrodipicolinate + H2O + H(+). Its pathway is amino-acid biosynthesis; L-lysine biosynthesis via DAP pathway; (S)-tetrahydrodipicolinate from L-aspartate: step 3/4. Catalyzes the condensation of (S)-aspartate-beta-semialdehyde [(S)-ASA] and pyruvate to 4-hydroxy-tetrahydrodipicolinate (HTPA). The polypeptide is 4-hydroxy-tetrahydrodipicolinate synthase (Salmonella arizonae (strain ATCC BAA-731 / CDC346-86 / RSK2980)).